The following is a 120-amino-acid chain: NAD(P)H-quinone oxidoreductase subunit 3, chloroplastic (120 aa).

Helical transmembrane passes span 9–29 (IFWA…LISG), 64–84 (MFAL…PWAM), and 88–108 (VLGV…IVGS).

The protein belongs to the complex I subunit 3 family. NDH is composed of at least 16 different subunits, 5 of which are encoded in the nucleus.

Its subcellular location is the plastid. It localises to the chloroplast thylakoid membrane. It catalyses the reaction a plastoquinone + NADH + (n+1) H(+)(in) = a plastoquinol + NAD(+) + n H(+)(out). The catalysed reaction is a plastoquinone + NADPH + (n+1) H(+)(in) = a plastoquinol + NADP(+) + n H(+)(out). Its function is as follows. NDH shuttles electrons from NAD(P)H:plastoquinone, via FMN and iron-sulfur (Fe-S) centers, to quinones in the photosynthetic chain and possibly in a chloroplast respiratory chain. The immediate electron acceptor for the enzyme in this species is believed to be plastoquinone. Couples the redox reaction to proton translocation, and thus conserves the redox energy in a proton gradient. In Liriodendron tulipifera (Tuliptree), this protein is NAD(P)H-quinone oxidoreductase subunit 3, chloroplastic.